A 261-amino-acid polypeptide reads, in one-letter code: Endomucin (261 aa).

Positions M1–S18 are cleaved as a signal peptide. N-linked (GlcNAc...) asparagine glycans are attached at residues N19, N28, N98, and N104. The Extracellular portion of the chain corresponds to N19–S190. Composition is skewed to polar residues over residues T118–T134 and A146–I171. Positions T118–A183 are disordered. Residues N164 and N178 are each glycosylated (N-linked (GlcNAc...) asparagine). A helical membrane pass occupies residues I191–G211. The Cytoplasmic segment spans residues L212 to N261. A Phosphoserine modification is found at S237.

Post-translationally, highly O-glycosylated. Sialic acid-rich glycoprotein. Expressed in heart, kidney and lung.

The protein localises to the cell membrane. The protein resides in the membrane. It is found in the secreted. Its function is as follows. Endothelial sialomucin, also called endomucin or mucin-like sialoglycoprotein, which interferes with the assembly of focal adhesion complexes and inhibits interaction between cells and the extracellular matrix. This is Endomucin (EMCN) from Homo sapiens (Human).